We begin with the raw amino-acid sequence, 151 residues long: SsrA-binding protein (151 aa).

The protein belongs to the SmpB family.

It is found in the cytoplasm. Its function is as follows. Required for rescue of stalled ribosomes mediated by trans-translation. Binds to transfer-messenger RNA (tmRNA), required for stable association of tmRNA with ribosomes. tmRNA and SmpB together mimic tRNA shape, replacing the anticodon stem-loop with SmpB. tmRNA is encoded by the ssrA gene; the 2 termini fold to resemble tRNA(Ala) and it encodes a 'tag peptide', a short internal open reading frame. During trans-translation Ala-aminoacylated tmRNA acts like a tRNA, entering the A-site of stalled ribosomes, displacing the stalled mRNA. The ribosome then switches to translate the ORF on the tmRNA; the nascent peptide is terminated with the 'tag peptide' encoded by the tmRNA and targeted for degradation. The ribosome is freed to recommence translation, which seems to be the essential function of trans-translation. The chain is SsrA-binding protein from Flavobacterium johnsoniae (strain ATCC 17061 / DSM 2064 / JCM 8514 / BCRC 14874 / CCUG 350202 / NBRC 14942 / NCIMB 11054 / UW101) (Cytophaga johnsonae).